The primary structure comprises 567 residues: Proline--tRNA ligase (567 aa).

This sequence belongs to the class-II aminoacyl-tRNA synthetase family. ProS type 1 subfamily. As to quaternary structure, homodimer.

It is found in the cytoplasm. It catalyses the reaction tRNA(Pro) + L-proline + ATP = L-prolyl-tRNA(Pro) + AMP + diphosphate. Its function is as follows. Catalyzes the attachment of proline to tRNA(Pro) in a two-step reaction: proline is first activated by ATP to form Pro-AMP and then transferred to the acceptor end of tRNA(Pro). As ProRS can inadvertently accommodate and process non-cognate amino acids such as alanine and cysteine, to avoid such errors it has two additional distinct editing activities against alanine. One activity is designated as 'pretransfer' editing and involves the tRNA(Pro)-independent hydrolysis of activated Ala-AMP. The other activity is designated 'posttransfer' editing and involves deacylation of mischarged Ala-tRNA(Pro). The misacylated Cys-tRNA(Pro) is not edited by ProRS. This chain is Proline--tRNA ligase, found in Streptomyces coelicolor (strain ATCC BAA-471 / A3(2) / M145).